The primary structure comprises 271 residues: MVVAKKSLGQHFLTDESFLDRIVSALPPLNSLRLIEIGVGLGDLTLKLLDRYPLKTYEIDSSLCEKMRERLKKQKKPFELELAEKDALFLKEEEPYFLISNLPYYIATRLVLNAFKDPKCRGLLVMTQKEVALKFCTKDSQNALSVLAHAIGNVTLLFDVPPSAFSPSPKVFSSMFEVIKEPLKEKALASLIPTLSFEEALQKGFETLEDFLKACFSSPRKTLSNNLKKSVSYKEKLDKVLDFLALENQPTSVRASEIQDYLKLLKYLLKG.

S-adenosyl-L-methionine is bound by residues His11, Leu13, Gly38, Glu58, Asp86, and Asn101.

The protein belongs to the class I-like SAM-binding methyltransferase superfamily. rRNA adenine N(6)-methyltransferase family. RsmA subfamily.

It is found in the cytoplasm. The enzyme catalyses adenosine(1518)/adenosine(1519) in 16S rRNA + 4 S-adenosyl-L-methionine = N(6)-dimethyladenosine(1518)/N(6)-dimethyladenosine(1519) in 16S rRNA + 4 S-adenosyl-L-homocysteine + 4 H(+). In terms of biological role, specifically dimethylates two adjacent adenosines (A1518 and A1519) in the loop of a conserved hairpin near the 3'-end of 16S rRNA in the 30S particle. May play a critical role in biogenesis of 30S subunits. The polypeptide is Ribosomal RNA small subunit methyltransferase A (Helicobacter acinonychis (strain Sheeba)).